We begin with the raw amino-acid sequence, 190 residues long: Elongation factor P 2 (190 aa).

It belongs to the elongation factor P family.

The protein resides in the cytoplasm. It participates in protein biosynthesis; polypeptide chain elongation. Involved in peptide bond synthesis. Stimulates efficient translation and peptide-bond synthesis on native or reconstituted 70S ribosomes in vitro. Probably functions indirectly by altering the affinity of the ribosome for aminoacyl-tRNA, thus increasing their reactivity as acceptors for peptidyl transferase. The polypeptide is Elongation factor P 2 (efp2) (Protochlamydia amoebophila (strain UWE25)).